A 199-amino-acid chain; its full sequence is Dephospho-CoA kinase (199 aa).

In terms of domain architecture, DPCK spans 3–199; sequence VLGLTGSIGM…AAAKMPRRRD (197 aa). ATP is bound at residue 11-16; sequence GMGKST.

The protein belongs to the CoaE family.

It localises to the cytoplasm. The catalysed reaction is 3'-dephospho-CoA + ATP = ADP + CoA + H(+). It participates in cofactor biosynthesis; coenzyme A biosynthesis; CoA from (R)-pantothenate: step 5/5. Functionally, catalyzes the phosphorylation of the 3'-hydroxyl group of dephosphocoenzyme A to form coenzyme A. The protein is Dephospho-CoA kinase of Rhodopseudomonas palustris (strain ATCC BAA-98 / CGA009).